Here is an 89-residue protein sequence, read N- to C-terminus: uncharacterized protein (89 aa).

2 helical membrane passes run 1–21 (MFLALTSIAIPAAIVIPISLI) and 28–48 (GISLTFSMTIGFVGLILTIAA).

It localises to the cell membrane. This is an uncharacterized protein from Methanocaldococcus jannaschii (strain ATCC 43067 / DSM 2661 / JAL-1 / JCM 10045 / NBRC 100440) (Methanococcus jannaschii).